Consider the following 111-residue polypeptide: Wound-induced proteinase inhibitor 1 (111 aa).

A signal peptide spans 1–23; that stretch reads MEAKFAHIILFFLLAFSFETLMA. The propeptide occupies 24-36; it reads RKESDGPEVIKLL.

This sequence belongs to the protease inhibitor I13 (potato type I serine protease inhibitor) family.

It localises to the secreted. The protein is Wound-induced proteinase inhibitor 1 of Solanum peruvianum (Peruvian tomato).